Here is a 314-residue protein sequence, read N- to C-terminus: Hydroxyacyl-coenzyme A dehydrogenase, mitochondrial (314 aa).

Residues 1–12 (MAFVTRQFVRSM) constitute a mitochondrion transit peptide. Residues 34 to 39 (GGGLMG) and D57 contribute to the NAD(+) site. S73 provides a ligand contact to CoA. N6-acetyllysine is present on K75. A CoA-binding site is contributed by K80. N6-succinyllysine is present on K80. Residues K81 and K87 each carry the N6-acetyllysine; alternate modification. K81 and K87 each carry N6-succinyllysine; alternate. Residue E122 coordinates NAD(+). K125 bears the N6-acetyllysine mark. K127 is a binding site for NAD(+). Residue K127 is modified to N6-(2-hydroxyisobutyryl)lysine. K136 is subject to N6-acetyllysine; alternate. Residue K136 is modified to N6-succinyllysine; alternate. Positions 149 and 173 each coordinate NAD(+). Residue S149 coordinates CoA. Residue K179 is modified to N6-acetyllysine. An N6-acetyllysine; alternate mark is found at K185, K192, and K202. 3 positions are modified to N6-succinyllysine; alternate: K185, K192, and K202. K206 carries the N6-succinyllysine modification. Residues K212 and K241 each carry the N6-acetyllysine; alternate modification. N6-succinyllysine; alternate is present on residues K212 and K241. NAD(+) is bound at residue K305. N6-acetyllysine; alternate is present on K312. The residue at position 312 (K312) is an N6-succinyllysine; alternate.

Belongs to the 3-hydroxyacyl-CoA dehydrogenase family. As to quaternary structure, homodimer. Interacts with GLUD1; this interaction inhibits the activation of glutamate dehydrogenase 1 (GLUD1). In terms of processing, succinylation at Lys-81, adjacent to a coenzyme A binding site. Desuccinylated by SIRT5.

Its subcellular location is the mitochondrion matrix. The catalysed reaction is a (3S)-3-hydroxyacyl-CoA + NAD(+) = a 3-oxoacyl-CoA + NADH + H(+). It catalyses the reaction (3S)-3-hydroxybutanoyl-CoA + NAD(+) = acetoacetyl-CoA + NADH + H(+). It carries out the reaction (3S)-hydroxydecanoyl-CoA + NAD(+) = 3-oxodecanoyl-CoA + NADH + H(+). The enzyme catalyses (3S)-hydroxyhexadecanoyl-CoA + NAD(+) = 3-oxohexadecanoyl-CoA + NADH + H(+). It participates in lipid metabolism; fatty acid beta-oxidation. In terms of biological role, mitochondrial fatty acid beta-oxidation enzyme that catalyzes the third step of the beta-oxidation cycle for medium and short-chain 3-hydroxy fatty acyl-CoAs (C4 to C10). Plays a role in the control of insulin secretion by inhibiting the activation of glutamate dehydrogenase 1 (GLUD1), an enzyme that has an important role in regulating amino acid-induced insulin secretion. Plays a role in the maintenance of normal spermatogenesis through the reduction of fatty acid accumulation in the testes. This is Hydroxyacyl-coenzyme A dehydrogenase, mitochondrial (Hadh) from Rattus norvegicus (Rat).